A 74-amino-acid polypeptide reads, in one-letter code: Protein kish-B (74 aa).

A signal peptide spans 1–22; sequence MTNVYSLDGILVFGLLFVCTCA. Topologically, residues 23–52 are extracellular; that stretch reads YFKKVPRLKTWLLSEKKGVWGVFYKAAVIG. Residues 53 to 73 form a helical membrane-spanning segment; the sequence is TRLHAAVAIACVVMAFYVLFI. Position 74 (Lys-74) is a topological domain, cytoplasmic.

This sequence belongs to the KISH family.

It is found in the golgi apparatus membrane. Functionally, involved in the early part of the secretory pathway. This Homo sapiens (Human) protein is Protein kish-B (TMEM167B).